Reading from the N-terminus, the 837-residue chain is MTTPKLDRRQVLKLEAAAMAALAGGIAMPAAAANLVTERAVSELKWDKAACRFCGTGCSVMVATKENRVVATHGDTKSEVNRGLNCVKGYFLSKIMYGHDRLTQPMLRKTDGKYDKNGEFMPVSWDEAFDIMAEKFKAALKKRGPSGVGMFGSGQWTVWEGYAASKLFKAGFRSNNIDPNARHCMASAVAGFMRTFGIDEPMGCYDDIEAADVFVLWGSNMAEMHPLLWTRVTDRRLSAPHVKVAVLSTFEHRSFDLADLGLVFKPQTDLAILNAIANHIIKTGRVNKDFVAKHTTFKRGQTDIGYGLRPEHPLQKAATGAAKANDATDMSFEDYAAFVADYTIEKASQISGVPAAKIEALAELYADPNTKVTSFWTMGFNQHTRGVWANNLAYNLHLLTGKISEPGNSPFSLTGQPSACGTAREVGTFSHRLPADMVVTNKKHRDIAEKIWKLPEGTIPDKPGYHAVLQSRMLKDGLLNAYWVQVNNNLQAGANANEETYPGFRNPDNFIVVSDAYPSVTALAADLILPTAMWVEKEGAYGNAERRTQFWHQLVSAPGQARSDLWQLMEFAKRFKIEEVWTEELLAKKPEVRGKTMYDVLYRNGQVDKYPSSDIEAGYLNDESKAFGYYVQKGLFEEYASFGRGHGHDLAPFDDYHRERGLRWPVVNGQETRWRFREGSDPYVQQGAGVQFYGFPDGRARIFALPYEPAAEAPDAEFPFWLSTGRVLEHWHSGTMTRRVPELYKAFPEAVCFMHPDDAAELKLRRGDEIKVESRRGFIRTRVETRGRNKPPRGLVFVPWFDEAQLINKVTLDATDPISLQTDYKKCAVRIERVTAS.

Residues 1 to 33 constitute a signal peptide (tat-type signal); that stretch reads MTTPKLDRRQVLKLEAAAMAALAGGIAMPAAAA. In terms of domain architecture, 4Fe-4S Mo/W bis-MGD-type spans 44–100; the sequence is LKWDKAACRFCGTGCSVMVATKENRVVATHGDTKSEVNRGLNCVKGYFLSKIMYGHD. [4Fe-4S] cluster is bound by residues Cys-51, Cys-54, Cys-58, and Cys-86. Mo-bis(molybdopterin guanine dinucleotide)-binding positions include Lys-88, Gln-155, Asn-180, Cys-184, 217-224, 248-252, 267-269, Met-378, Gln-382, Asn-488, 514-515, Lys-537, Asp-564, and 724-733; these read WGSNMAEM, STFEH, QTD, SD, and TGRVLEHWHS. Trp-800 contacts substrate. Positions 808 and 825 each coordinate Mo-bis(molybdopterin guanine dinucleotide).

It belongs to the prokaryotic molybdopterin-containing oxidoreductase family. NasA/NapA/NarB subfamily. Component of the periplasmic nitrate reductase NapAB complex composed of NapA and NapB. Requires [4Fe-4S] cluster as cofactor. The cofactor is Mo-bis(molybdopterin guanine dinucleotide). Predicted to be exported by the Tat system. The position of the signal peptide cleavage has not been experimentally proven.

The protein localises to the periplasm. It catalyses the reaction 2 Fe(II)-[cytochrome] + nitrate + 2 H(+) = 2 Fe(III)-[cytochrome] + nitrite + H2O. Functionally, catalytic subunit of the periplasmic nitrate reductase complex NapAB. Receives electrons from NapB and catalyzes the reduction of nitrate to nitrite. This chain is Periplasmic nitrate reductase, found in Rhodopseudomonas palustris (strain BisB18).